The following is a 128-amino-acid chain: Prokineticin-2 (128 aa).

The N-terminal stretch at 1-27 (MRSSRCARLLLLLLLPPLLLTPPAGDA) is a signal peptide. Intrachain disulfides connect Cys34/Cys46, Cys40/Cys58, Cys45/Cys106, Cys68/Cys114, and Cys108/Cys124. Residues 71–95 (MTRKNHFGNGRQERRKRKRRRKKKV) form a disordered region. Residues 83-95 (ERRKRKRRRKKKV) are compositionally biased toward basic residues.

It belongs to the AVIT (prokineticin) family.

It is found in the secreted. In terms of biological role, may function as an output molecule from the suprachiasmatic nucleus (SCN) that transmits behavioral circadian rhythm. May also function locally within the SCN to synchronize output. Potently contracts gastrointestinal (GI) smooth muscle. The polypeptide is Prokineticin-2 (PROK2) (Bos taurus (Bovine)).